We begin with the raw amino-acid sequence, 352 residues long: MAPKLITVLCLGFCLNQKICPHAGAQDKFSLSAWPSPVVPLGGRVTLSCHSHLRFVIWTIFQTTGTRSHELHTGLSNNITISPVTPEHAGTYRCVGIYKHASKWSAESNSLKIIVTGLFTKPSISAHPSSLVHAGARVSLRCHSELAFDEFILYKEGHIQHSQQLDQGMEAGIHYVEAVFSMGPVTPAHAGAYRCCGCFSHSRYEWSAPSDPLDIVITGKYKKPSLSTQVDPMMRLGEKLTLFCSSEISFDQYHLFRHGVAHGQWLSGGQRHREAFQANFSVGRATPVPGGTYRCYGSFNDSPYKPPVTRCNFTPQETLRVLLCHSQNPPLNLTHLALKDSPATCICSLDSQ.

The signal sequence occupies residues 1–16; sequence MAPKLITVLCLGFCLN. 2 consecutive Ig-like C2-type domains span residues 17 to 112 and 224 to 311; these read QKIC…NSLK and PSLS…VTRC. 2 cysteine pairs are disulfide-bonded: Cys49–Cys94 and Cys244–Cys295. Residue Asn78 is glycosylated (N-linked (GlcNAc...) asparagine).

Expressed in NK-cells.

Its subcellular location is the secreted. This is Putative killer cell immunoglobulin-like receptor-like protein KIR3DX1 (KIR3DX1) from Homo sapiens (Human).